We begin with the raw amino-acid sequence, 145 residues long: MSRVRQLLDKLPWYTDNIHSILMYLIMGGFTTLINIVTFWLCTDVLNWDYRIANTIAWVASVLFAYFSNKKYVFESYTPTWKEKAREVSSFFGFRFLTYIVDFLVMILLISGLGINELWAKIWTNVIVLILNYVFSKWIIFKVRK.

The next 4 membrane-spanning stretches (helical) occupy residues 21–41 (ILMY…TFWL), 52–69 (IANT…YFSN), 96–116 (FLTY…LGIN), and 121–141 (KIWT…WIIF).

The protein belongs to the GtrA family.

The protein resides in the cell membrane. Involved in the decoration of cell wall teichoic acid with galactose and glucose. This Listeria innocua serovar 6a (strain ATCC BAA-680 / CLIP 11262) protein is Cell wall teichoic acid glycosylation protein GtcA (gtcA).